A 523-amino-acid chain; its full sequence is Signal peptide peptidase-like 3 (523 aa).

The N-terminal stretch at 1 to 35 (MAFPAPSSSSPRRRGRGLAYLLVSVLLLASRVPGA) is a signal peptide. The Lumenal portion of the chain corresponds to 36 to 207 (AGADSEFEDG…EKPSFDGAIP (172 aa)). Residues 110 to 182 (SAPLASSIAV…SQSAGRKILS (73 aa)) form the PA domain. N-linked (GlcNAc...) asparagine glycosylation occurs at Asn-159. The chain crosses the membrane as a helical span at residues 208-228 (FLWLMAVGSVACASVWSFVVV). At 229–254 (GDEDKNAPTLGGEEAADSEIVELQTK) the chain is on the cytoplasmic side. A helical transmembrane segment spans residues 255–272 (TALVFIVTASLVLLFLFF). Topologically, residues 273–275 (FKS) are lumenal. A helical transmembrane segment spans residues 276 to 298 (TWSAWLLVVLFCLSGLQGLHYVA). The Cytoplasmic portion of the chain corresponds to 299-321 (STLIVRTCDRCREAKVALPVLGN). The helical transmembrane segment at 322 to 342 (VTVVTLVILPLALIFVVVWAV) threads the bilayer. The Lumenal portion of the chain corresponds to 343–347 (HQNSP). Residues 348 to 368 (FAWVGQDLMGICMMILVLQVV) traverse the membrane as a helical segment. At 369–377 (HLPNIKVAT) the chain is on the cytoplasmic side. Residues 378–398 (ALLVSAFMYDIFWVFISPFIF) traverse the membrane as a helical segment. The active site involves Asp-387. At 399-430 (KKSVMITVARGSDEGPSLPMVLKMPKEFDTWN) the chain is on the lumenal side. Residues 431–451 (GYDMIGFGDILFPGLLVAFSF) form a helical membrane-spanning segment. Residue Asp-439 is part of the active site. The Cytoplasmic segment spans residues 452 to 465 (RYDRANGKDLTDGY). Residues 466–486 (FLCLMIGYAFGLSCTYVGLYL) traverse the membrane as a helical segment. Residues 487-489 (MKS) are Lumenal-facing. A helical membrane pass occupies residues 490–510 (GQPALLYLVPSTLGTIVTLGA). A PAL motif is present at residues 492-494 (PAL). The Cytoplasmic portion of the chain corresponds to 511–523 (KRGELSQLWNAKV).

It belongs to the peptidase A22B family. Glycosylated.

It is found in the endosome membrane. Intramembrane-cleaving aspartic protease (I-CLiP) that cleaves type II membrane signal peptides in the hydrophobic plane of the membrane. This is Signal peptide peptidase-like 3 (SPPL3) from Oryza sativa subsp. japonica (Rice).